The following is a 451-amino-acid chain: L-seryl-tRNA(Sec) selenium transferase (451 aa).

Lys286 bears the N6-(pyridoxal phosphate)lysine mark.

Belongs to the SelA family. Pyridoxal 5'-phosphate serves as cofactor.

It is found in the cytoplasm. It carries out the reaction L-seryl-tRNA(Sec) + selenophosphate + H(+) = L-selenocysteinyl-tRNA(Sec) + phosphate. The protein operates within aminoacyl-tRNA biosynthesis; selenocysteinyl-tRNA(Sec) biosynthesis; selenocysteinyl-tRNA(Sec) from L-seryl-tRNA(Sec) (bacterial route): step 1/1. Its function is as follows. Converts seryl-tRNA(Sec) to selenocysteinyl-tRNA(Sec) required for selenoprotein biosynthesis. This Aliarcobacter butzleri (strain RM4018) (Arcobacter butzleri) protein is L-seryl-tRNA(Sec) selenium transferase.